A 529-amino-acid chain; its full sequence is DEP domain-containing protein 1B (529 aa).

The region spanning 24 to 108 (FRAKMPLRKH…DNRHLYRFPP (85 aa)) is the DEP domain. Ser-160 carries the post-translational modification Phosphoserine. A Rho-GAP domain is found at 201 to 393 (DSLEEVLDVK…FLMDNYQEIL (193 aa)). Phosphoserine is present on Ser-436.

This is DEP domain-containing protein 1B (DEPDC1B) from Homo sapiens (Human).